A 115-amino-acid chain; its full sequence is MRLNHKQGEAGEDAALAFLQSQGCTLLARNWHCAYGEIDLIVKNGGMILFVEVKYRKNRQFGGVAYSISPSKLLKLQRSVEYYLQQNRLTNVPCRLDAVLIEGNRPPEWIQNITG.

It belongs to the UPF0102 family.

The polypeptide is UPF0102 protein NMCC_2054 (Neisseria meningitidis serogroup C (strain 053442)).